The chain runs to 551 residues: MKANHIRILLLVTIAIMFISLMGKWEQTFPADNTKQQTSATQNNSHYDNADSSTNTDVTTTDAKSSLAKETNFSKYDNAKSITINTGVFKDVKVSLLDGAIISASLKDYSISLDDKTPMSLLTDKSGSEYIAKSTIVVNKQPISVNFEDQGIKTENGKQILTLTGSADGLQITRTYTFDDTKYNISVSQNIKNTTSAPVNVIVDDSFARDFDPAGDSFSLLNAHSYTFTGVAYSTAKDSFRKESFKDISKTNGQPTVINSDGQGWVAFLQHYFVSAWIPQSTNAKIYYKNLNGDVFEAGAFTGATIAPNQSENISSILYTGPIIKANLVDLAPNLEKTLDYGMLSFFSEIIFWVMNHIHSLVGNWGLAIILVTCLIKLIFYPLSAKSYRSMAKMRMLQPRIKRLQETYKDDRQALGKKMMELYKEEKVNPLSGCLPMLIQIPIFISLYWVLLESVELRQAPFIFWIHDLSMKDPYFVLPVLMGLSMFLQQKLSPAPADPMQAKVMMFLPVIFTFLFASFPSGLVLYWLTNNLISISQQWIITRHYQATHKK.

The chain crosses the membrane as a helical span at residues 3–23 (ANHIRILLLVTIAIMFISLMG). The span at 33 to 47 (NTKQQTSATQNNSHY) shows a compositional bias: polar residues. Positions 33-58 (NTKQQTSATQNNSHYDNADSSTNTDV) are disordered. 3 helical membrane-spanning segments follow: residues 361-381 (LVGNWGLAIILVTCLIKLIFY), 431-451 (LSGCLPMLIQIPIFISLYWVL), and 504-524 (VMMFLPVIFTFLFASFPSGLV).

The protein belongs to the OXA1/ALB3/YidC family. Type 1 subfamily. In terms of assembly, interacts with the Sec translocase complex via SecD. Specifically interacts with transmembrane segments of nascent integral membrane proteins during membrane integration.

The protein resides in the cell inner membrane. Required for the insertion and/or proper folding and/or complex formation of integral membrane proteins into the membrane. Involved in integration of membrane proteins that insert both dependently and independently of the Sec translocase complex, as well as at least some lipoproteins. Aids folding of multispanning membrane proteins. This is Membrane protein insertase YidC from Francisella tularensis subsp. novicida (strain U112).